Here is a 358-residue protein sequence, read N- to C-terminus: Phenylalanine--tRNA ligase alpha subunit (358 aa).

Glu279 is a Mg(2+) binding site.

This sequence belongs to the class-II aminoacyl-tRNA synthetase family. Phe-tRNA synthetase alpha subunit type 1 subfamily. As to quaternary structure, tetramer of two alpha and two beta subunits. It depends on Mg(2+) as a cofactor.

It is found in the cytoplasm. The catalysed reaction is tRNA(Phe) + L-phenylalanine + ATP = L-phenylalanyl-tRNA(Phe) + AMP + diphosphate + H(+). In Variovorax paradoxus (strain S110), this protein is Phenylalanine--tRNA ligase alpha subunit.